The chain runs to 393 residues: ATP phosphoribosyltransferase regulatory subunit (393 aa).

The protein belongs to the class-II aminoacyl-tRNA synthetase family. HisZ subfamily. In terms of assembly, heteromultimer composed of HisG and HisZ subunits.

It localises to the cytoplasm. The protein operates within amino-acid biosynthesis; L-histidine biosynthesis; L-histidine from 5-phospho-alpha-D-ribose 1-diphosphate: step 1/9. Required for the first step of histidine biosynthesis. May allow the feedback regulation of ATP phosphoribosyltransferase activity by histidine. This is ATP phosphoribosyltransferase regulatory subunit from Synechococcus sp. (strain RCC307).